The primary structure comprises 182 residues: Small ribosomal subunit protein uS9 (182 aa).

The protein belongs to the universal ribosomal protein uS9 family.

This Corynebacterium efficiens (strain DSM 44549 / YS-314 / AJ 12310 / JCM 11189 / NBRC 100395) protein is Small ribosomal subunit protein uS9.